We begin with the raw amino-acid sequence, 158 residues long: NAD(P)H-quinone oxidoreductase subunit J, chloroplastic (158 aa).

Belongs to the complex I 30 kDa subunit family. NDH is composed of at least 16 different subunits, 5 of which are encoded in the nucleus.

Its subcellular location is the plastid. It localises to the chloroplast thylakoid membrane. The enzyme catalyses a plastoquinone + NADH + (n+1) H(+)(in) = a plastoquinol + NAD(+) + n H(+)(out). It catalyses the reaction a plastoquinone + NADPH + (n+1) H(+)(in) = a plastoquinol + NADP(+) + n H(+)(out). NDH shuttles electrons from NAD(P)H:plastoquinone, via FMN and iron-sulfur (Fe-S) centers, to quinones in the photosynthetic chain and possibly in a chloroplast respiratory chain. The immediate electron acceptor for the enzyme in this species is believed to be plastoquinone. Couples the redox reaction to proton translocation, and thus conserves the redox energy in a proton gradient. In Solanum tuberosum (Potato), this protein is NAD(P)H-quinone oxidoreductase subunit J, chloroplastic.